The following is a 398-amino-acid chain: Succinate--CoA ligase [ADP-forming] subunit beta (398 aa).

The ATP-grasp domain maps to 9–254 (KRLLHEYGAP…TSEEDPKEIE (246 aa)). Residues Lys46, 53–55 (GRG), Glu109, Ala112, and Glu117 contribute to the ATP site. Mg(2+) contacts are provided by Asn209 and Asp223. Substrate-binding positions include Asn274 and 331–333 (GIM).

It belongs to the succinate/malate CoA ligase beta subunit family. Heterotetramer of two alpha and two beta subunits. Mg(2+) serves as cofactor.

The catalysed reaction is succinate + ATP + CoA = succinyl-CoA + ADP + phosphate. It catalyses the reaction GTP + succinate + CoA = succinyl-CoA + GDP + phosphate. It participates in carbohydrate metabolism; tricarboxylic acid cycle; succinate from succinyl-CoA (ligase route): step 1/1. Its function is as follows. Succinyl-CoA synthetase functions in the citric acid cycle (TCA), coupling the hydrolysis of succinyl-CoA to the synthesis of either ATP or GTP and thus represents the only step of substrate-level phosphorylation in the TCA. The beta subunit provides nucleotide specificity of the enzyme and binds the substrate succinate, while the binding sites for coenzyme A and phosphate are found in the alpha subunit. In Bartonella henselae (strain ATCC 49882 / DSM 28221 / CCUG 30454 / Houston 1) (Rochalimaea henselae), this protein is Succinate--CoA ligase [ADP-forming] subunit beta.